Here is a 124-residue protein sequence, read N- to C-terminus: ATP synthase epsilon chain (124 aa).

It belongs to the ATPase epsilon chain family. F-type ATPases have 2 components, CF(1) - the catalytic core - and CF(0) - the membrane proton channel. CF(1) has five subunits: alpha(3), beta(3), gamma(1), delta(1), epsilon(1). CF(0) has three main subunits: a, b and c.

Its subcellular location is the cell membrane. Produces ATP from ADP in the presence of a proton gradient across the membrane. In Corynebacterium glutamicum (strain ATCC 13032 / DSM 20300 / JCM 1318 / BCRC 11384 / CCUG 27702 / LMG 3730 / NBRC 12168 / NCIMB 10025 / NRRL B-2784 / 534), this protein is ATP synthase epsilon chain.